Reading from the N-terminus, the 313-residue chain is Protein FixB (313 aa).

Residue 255–283 (LYLAVGISGQIQHMVGANASQTIFAINKD) coordinates FAD.

It belongs to the ETF alpha-subunit/FixB family. As to quaternary structure, heterodimer of FixA and FixB.

The protein operates within amine and polyamine metabolism; carnitine metabolism. Its function is as follows. Required for anaerobic carnitine reduction. May bring reductant to CaiA. The chain is Protein FixB from Escherichia coli O139:H28 (strain E24377A / ETEC).